The following is a 386-amino-acid chain: Acyl-CoA ligase lcsD (386 aa).

Residues 62 to 132 (ELEQTLLAIQ…ELLPACKIIQ (71 aa)) are SBD1. ATP is bound at residue 107-115 (AVGASGISK). An SBD2 region spans residues 133 to 195 (GYGMTETTGV…LRSPSVVIGY (63 aa)). Threonine 137 is a binding site for substrate. Residues aspartate 216 and arginine 235 each coordinate ATP. CoA is bound by residues 243-245 (RGL) and 313-316 (HLDG). Lysine 331 contributes to the ATP binding site. A disordered region spans residues 352–386 (REKAANGVHKVHVNGVKRPEKMEVFDLSSDDEDDD).

The protein belongs to the ATP-dependent AMP-binding enzyme family.

It participates in secondary metabolite biosynthesis. Acyl-CoA ligase; part of the gene cluster that mediates the biosynthesis of the lipopeptide antibiotics leucinostatins that show extensive biological activities, including antimalarial, antiviral, antibacterial, antifungal, and antitumor activities, as well as phytotoxic. Leucinostatin A contains nine amino acid residues, including the unusual amino acid 4-methyl-L-proline (MePro), 2-amino-6-hydroxy-4-methyl-8-oxodecanoic acid (AHyMeOA), 3-hydroxyleucine (HyLeu), alpha-aminoisobutyric acid (AIB), beta-Ala, a 4-methylhex-2-enoic acid at the N-terminus as well as a N1,N1-dimethylpropane-1,2-diamine (DPD) at the C-terminus. The biosynthesis of leucinostatins is probably initiated with the assembly of 4-methylhex-2-enoic acid by a reducing PKS. Two reducing polyketide synthases, lcsB and lcsC, have been identified in the cluster and it is not clear which is the one that assembles 4-methylhex-2-enoic acid since both contain KS, AT, DH, cMT, ER, KR and ACP domains. The polyketide residue might be transferred to the NRPS lcsA, mediated by two additional enzymes, the acyl-CoA ligase lcsD and the thioesterase lcsE. The linear polyketide carboxylic acid, which is released from PKS, is converted to a CoA thioester by lcsD, and then lcsE hydrolyzes the thiol bond and shuttles the polyketide intermediate to lcsA. The C domain of the first module catalyzed the condensation of 4-methylhex-2-enoic acid and MePro carried by domain A1, followed by successive condensations of nine amino acids to trigger the elongation of the linear peptide. A5 and A6 domains of lcsA are proposed to incorporate leucine, A2 AHyMeOA, and A3 incorporates HyLeu. A4, A7 and A8 incorporate AIB. The AHyMeOA in leucinostatin A activated by the A2 might be produced by the second PKS (lcsB or lcsC) present within the cluster. The MePro is probably produced via leucine cyclization and may originate from a separate pathway, independent of the cluster. Another nonproteinogenic amino acid, beta-Ala, could be produced by an aspartic acid decarboxylase also localized outside of the cluster. Two candidates are VFPBJ_01400 and VFPBJ_10476. The final peptide scaffold may be released by the NAD(P)H-dependent thioester reductase (TE) at the C-terminal region of lcsA. Transamination of the lcsA product by the transaminase lcsP may produce DPD at the C-terminus. Further hydroxylation steps performed alternatively by the cytochrome P450 monooxygenases lcsI, lcsK and lcsN then yield the non-methylated leucinostatins precursor. It is also possible that leucines can be hydroxylated prior to their incorporation into the peptide. Varying extents of methylation then lead to the formation of leucinostatins A and B. This chain is Acyl-CoA ligase lcsD, found in Purpureocillium lilacinum (Paecilomyces lilacinus).